A 176-amino-acid polypeptide reads, in one-letter code: Probable superoxide oxidase CybB (176 aa).

The next 4 membrane-spanning stretches (helical) occupy residues 7 to 27 (CLQIGIHWLVLLLVIIAWSSI), 44 to 64 (IHFSCGIAILVLMMTRILIQL), 85 to 105 (VGHWVIYLLFIALPIIGIAIL), and 137 to 157 (HLLLANMSYFVIGLHALAALL). Heme b-binding residues include histidine 13 and histidine 45. Positions 137 and 151 each coordinate heme b.

Belongs to the cytochrome b561 family. Heme b is required as a cofactor.

It is found in the cell inner membrane. It catalyses the reaction a ubiquinol + 2 O2 = 2 superoxide + a ubiquinone + 2 H(+). B-type di-heme cytochrome. Catalyzes the oxidation of superoxide to molecular oxygen and transfers the extracted electrons to ubiquinone through the two hemes. The chain is Probable superoxide oxidase CybB (cybB) from Yersinia pestis.